We begin with the raw amino-acid sequence, 400 residues long: Nicotinate phosphoribosyltransferase (400 aa).

H220 carries the post-translational modification Phosphohistidine; by autocatalysis.

Belongs to the NAPRTase family. Transiently phosphorylated on a His residue during the reaction cycle. Phosphorylation strongly increases the affinity for substrates and increases the rate of nicotinate D-ribonucleotide production. Dephosphorylation regenerates the low-affinity form of the enzyme, leading to product release.

It catalyses the reaction nicotinate + 5-phospho-alpha-D-ribose 1-diphosphate + ATP + H2O = nicotinate beta-D-ribonucleotide + ADP + phosphate + diphosphate. It participates in cofactor biosynthesis; NAD(+) biosynthesis; nicotinate D-ribonucleotide from nicotinate: step 1/1. Catalyzes the synthesis of beta-nicotinate D-ribonucleotide from nicotinate and 5-phospho-D-ribose 1-phosphate at the expense of ATP. The sequence is that of Nicotinate phosphoribosyltransferase from Salmonella dublin (strain CT_02021853).